The chain runs to 122 residues: NADPH-dependent 7-cyano-7-deazaguanine reductase (122 aa).

Cys34 acts as the Thioimide intermediate in catalysis. Asp41 functions as the Proton donor in the catalytic mechanism. Substrate is bound by residues 56–58 and 75–76; these read VEL and HE.

This sequence belongs to the GTP cyclohydrolase I family. QueF type 1 subfamily.

The protein localises to the cytoplasm. It catalyses the reaction 7-aminomethyl-7-carbaguanine + 2 NADP(+) = 7-cyano-7-deazaguanine + 2 NADPH + 3 H(+). It functions in the pathway tRNA modification; tRNA-queuosine biosynthesis. Functionally, catalyzes the NADPH-dependent reduction of 7-cyano-7-deazaguanine (preQ0) to 7-aminomethyl-7-deazaguanine (preQ1). This is NADPH-dependent 7-cyano-7-deazaguanine reductase from Anaeromyxobacter dehalogenans (strain 2CP-1 / ATCC BAA-258).